Consider the following 85-residue polypeptide: Cloacin immunity protein (85 aa).

N6-methyllysine is present on Lys-12.

This sequence belongs to the cloacin immunity protein family.

Functionally, this protein complexes with cloacin protein in equimolar amounts and inhibits it by binding with high affinity to the C-terminal catalytic domain of cloacin. The polypeptide is Cloacin immunity protein (cim) (Escherichia coli).